We begin with the raw amino-acid sequence, 315 residues long: MKTHSDRKSGLHPRNRHQAPYDFDALCLRTPELRPLVFVNEHGTQTLDFADPAAVKALNKALLALHYGIAHWDLPAGYLCPPIPGRVDYLHRVADLLAESAGCVPTGKGVRVLDIGVGANCIYPLLGAREYGWRFVGSDIDPVSVKAAALLAKSNGLGGQIECRHQGNAKHVFRGIISPQERFALTLCNPPFHGSLDEASKGSERKLGKTVQGQPVLNFGGQKAELWCEGGEAGFLATMIVQSKEFAAQCLWFSSLVSKKENLPAAKKALAQVGARQVRVIDMAQGNKVSRILAWSFLDEVACGQWWQPALRGGV.

The protein belongs to the methyltransferase superfamily. METTL16/RlmF family.

The protein resides in the cytoplasm. It catalyses the reaction adenosine(1618) in 23S rRNA + S-adenosyl-L-methionine = N(6)-methyladenosine(1618) in 23S rRNA + S-adenosyl-L-homocysteine + H(+). In terms of biological role, specifically methylates the adenine in position 1618 of 23S rRNA. The chain is Ribosomal RNA large subunit methyltransferase F from Aeromonas salmonicida (strain A449).